The sequence spans 366 residues: Beta sliding clamp (366 aa).

It belongs to the beta sliding clamp family. As to quaternary structure, forms a ring-shaped head-to-tail homodimer around DNA which binds and tethers DNA polymerases and other proteins to the DNA. The DNA replisome complex has a single clamp-loading complex (3 tau and 1 each of delta, delta', psi and chi subunits) which binds 3 Pol III cores (1 core on the leading strand and 2 on the lagging strand) each with a beta sliding clamp dimer. Additional proteins in the replisome are other copies of gamma, psi and chi, Ssb, DNA helicase and RNA primase.

The protein localises to the cytoplasm. In terms of biological role, confers DNA tethering and processivity to DNA polymerases and other proteins. Acts as a clamp, forming a ring around DNA (a reaction catalyzed by the clamp-loading complex) which diffuses in an ATP-independent manner freely and bidirectionally along dsDNA. Initially characterized for its ability to contact the catalytic subunit of DNA polymerase III (Pol III), a complex, multichain enzyme responsible for most of the replicative synthesis in bacteria; Pol III exhibits 3'-5' exonuclease proofreading activity. The beta chain is required for initiation of replication as well as for processivity of DNA replication. The protein is Beta sliding clamp (dnaN) of Salmonella typhimurium (strain LT2 / SGSC1412 / ATCC 700720).